The primary structure comprises 224 residues: Glycerol-3-phosphate acyltransferase (224 aa).

Transmembrane regions (helical) follow at residues 4–24 (FVIV…GSIN), 60–80 (LVIF…VYFV), 88–108 (SVVV…FPIW), 124–144 (IISV…LIII), 149–169 (IVSF…FIPW), and 182–202 (WPWW…IWSH).

It belongs to the PlsY family. In terms of assembly, probably interacts with PlsX.

It is found in the cell membrane. It catalyses the reaction an acyl phosphate + sn-glycerol 3-phosphate = a 1-acyl-sn-glycero-3-phosphate + phosphate. It functions in the pathway lipid metabolism; phospholipid metabolism. Catalyzes the transfer of an acyl group from acyl-phosphate (acyl-PO(4)) to glycerol-3-phosphate (G3P) to form lysophosphatidic acid (LPA). This enzyme utilizes acyl-phosphate as fatty acyl donor, but not acyl-CoA or acyl-ACP. In Mycoplasmopsis pulmonis (strain UAB CTIP) (Mycoplasma pulmonis), this protein is Glycerol-3-phosphate acyltransferase.